We begin with the raw amino-acid sequence, 535 residues long: Arylsulfatase K (535 aa).

An N-terminal signal peptide occupies residues 1–21; the sequence is MGSGGPLLLLRGLLLVGAAYC. Positions 41 and 81 each coordinate Ca(2+). Catalysis depends on Cys81, which acts as the Nucleophile. 3-oxoalanine (Cys) is present on Cys81. Lys129 contributes to the substrate binding site. Residue Asn194 is glycosylated (N-linked (GlcNAc...) asparagine). His252 lines the substrate pocket. An N-linked (GlcNAc...) asparagine glycan is attached at Asn263. 2 residues coordinate Ca(2+): Asp314 and His315. Asn376, Asn414, and Asn499 each carry an N-linked (GlcNAc...) asparagine glycan.

The protein belongs to the sulfatase family. Ca(2+) serves as cofactor. The conversion to 3-oxoalanine (also known as C-formylglycine, FGly), of a serine or cysteine residue in prokaryotes and of a cysteine residue in eukaryotes, is critical for catalytic activity.

The protein localises to the secreted. It is found in the lysosome. The enzyme catalyses an aryl sulfate + H2O = a phenol + sulfate + H(+). It catalyses the reaction Hydrolysis of the 2-sulfate groups of the 2-O-sulfo-D-glucuronate residues of chondroitin sulfate, heparin and heparitin sulfate.. In terms of biological role, catalyzes the hydrolysis of pseudosubstrates such as p-nitrocatechol sulfate and p-nitrophenyl sulfate. Catalyzes the hydrolysis of the 2-sulfate groups of the 2-O-sulfo-D-glucuronate residues of chondroitin sulfate, heparin and heparitin sulfate. Acts selectively on 2-sulfoglucuronate and lacks activity against 2-sulfoiduronate. The sequence is that of Arylsulfatase K (ARSK) from Gallus gallus (Chicken).